A 224-amino-acid polypeptide reads, in one-letter code: Transposase for insertion sequence element IS257 in transposon Tn4003 (224 aa).

Residues 33 to 52 (EILRGRGVNVHHSTVYRWVQ) constitute a DNA-binding region (H-T-H motif). The 150-residue stretch at 73 to 222 (WRIDETYIKI…SPCHEISIML (150 aa)) folds into the Integrase catalytic domain.

In terms of biological role, involved in the transposition of the insertion sequence. In Staphylococcus aureus, this protein is Transposase for insertion sequence element IS257 in transposon Tn4003.